A 296-amino-acid chain; its full sequence is Homoserine kinase (296 aa).

85 to 95 (PLSRGLGSSAA) is a binding site for ATP.

This sequence belongs to the GHMP kinase family. Homoserine kinase subfamily.

The protein localises to the cytoplasm. The catalysed reaction is L-homoserine + ATP = O-phospho-L-homoserine + ADP + H(+). The protein operates within amino-acid biosynthesis; L-threonine biosynthesis; L-threonine from L-aspartate: step 4/5. Its function is as follows. Catalyzes the ATP-dependent phosphorylation of L-homoserine to L-homoserine phosphate. This is Homoserine kinase from Clostridium acetobutylicum (strain ATCC 824 / DSM 792 / JCM 1419 / IAM 19013 / LMG 5710 / NBRC 13948 / NRRL B-527 / VKM B-1787 / 2291 / W).